Consider the following 118-residue polypeptide: MSRRVGEAGEQAAAEFLTASGYRIIARNVRFRSGEIDLIAQDGGVLVFVEVKTRRGRRYGTPGEAVTAAKQRRLARLASLYLARLGSEPPPCRFDVVEVEPGPDGRLRCRLIQNAFHA.

It belongs to the UPF0102 family.

This chain is UPF0102 protein STH1475, found in Symbiobacterium thermophilum (strain DSM 24528 / JCM 14929 / IAM 14863 / T).